A 177-amino-acid chain; its full sequence is FMRFamide-like neuropeptides 7 (177 aa).

An N-terminal signal peptide occupies residues 1–19 (MLGSRFLLLALGLLVLVLA). A propeptide spanning residues 20–49 (EESAEQQVQEPTELEKSGEQLSEEDLIDEQ) is cleaved from the precursor. Positions 25–106 (QQVQEPTELE…RSSMVRFGKR (82 aa)) are disordered. 6 positions are modified to phenylalanine amide: F62, F75, F89, F103, F117, and F130. L143 bears the Leucine amide mark. F157 is modified (phenylalanine amide). Positions 161–177 (SMEFEMQSNEKNIEDSE) are excised as a propeptide.

It belongs to the FARP (FMRFamide related peptide) family. In terms of tissue distribution, expressed in the ASI sensory neurons, the ALA interneuron and the AVG interneuron from where secretion occurs. Expression in the ASI neurons is necessary and sufficient to maintain serotonin-induced fat loss.

The protein localises to the secreted. Its function is as follows. FMRFamide-like neuropeptides. Stimulates serotonin-induced fat loss by binding to and activating the npr-22 receptor which leads to induction of the atgl-1 lipase and subsequent fat loss. Together with atfs-1, negatively regulates the expression of the transcription regulator hlh-11, to promote expression of atgl-1, and thus atgl-1-dependent fat oxidation in response to mitochondrial stress. In terms of biological role, TPMQRSSMVRF-amide: Acts as a ligand for the npr-22 receptor in vitro. SPMQRSSMVRF-amide: Acts as a ligand for the npr-22 receptor in vitro. Functionally, acts as a ligand for the npr-22 receptor in vitro. This is FMRFamide-like neuropeptides 7 from Caenorhabditis elegans.